A 346-amino-acid chain; its full sequence is Anthocyanidin 3-O-glucosyltransferase 2 (346 aa).

Residues Ala221, Gln223, His238, Trp241, Asn242, Ser243, and Glu246 each contribute to the UDP-alpha-D-glucose site. An anthocyanidin is bound at residue Ala261. UDP-alpha-D-glucose is bound by residues Glu262 and Gln263.

Belongs to the UDP-glycosyltransferase family. In terms of tissue distribution, expressed in cotyledons, roots and leaves.

It catalyses the reaction an anthocyanidin + UDP-alpha-D-glucose + H(+) = an anthocyanidin 3-O-beta-D-glucoside + UDP. It participates in pigment biosynthesis; anthocyanin biosynthesis. Its function is as follows. In the presence of other necessary color factors, this glycosylation reaction allows the accumulation of anthocyanin pigments. The chain is Anthocyanidin 3-O-glucosyltransferase 2 (GT2) from Manihot esculenta (Cassava).